A 176-amino-acid polypeptide reads, in one-letter code: Lipoprotein signal peptidase (176 aa).

Helical transmembrane passes span 12–32, 67–87, and 94–114; these read WYWV…WVLT, WQKW…TIWL, and VWRL…NLID. Residues Asp-123 and Asp-141 contribute to the active site. A helical transmembrane segment spans residues 133 to 153; the sequence is HFAAFNIADSAICIGAGLIIL.

The protein belongs to the peptidase A8 family.

The protein localises to the cell inner membrane. It carries out the reaction Release of signal peptides from bacterial membrane prolipoproteins. Hydrolyzes -Xaa-Yaa-Zaa-|-(S,diacylglyceryl)Cys-, in which Xaa is hydrophobic (preferably Leu), and Yaa (Ala or Ser) and Zaa (Gly or Ala) have small, neutral side chains.. It participates in protein modification; lipoprotein biosynthesis (signal peptide cleavage). This protein specifically catalyzes the removal of signal peptides from prolipoproteins. This Shewanella sediminis (strain HAW-EB3) protein is Lipoprotein signal peptidase.